Reading from the N-terminus, the 312-residue chain is 2-phosphoglycerate kinase (312 aa).

The 88-residue stretch at Ser-8 to Ser-95 folds into the ATP-cone domain.

The protein belongs to the 2-phosphoglycerate kinase family. A divalent metal cation serves as cofactor.

The enzyme catalyses (2R)-2-phosphoglycerate + ATP = (2R)-2,3-bisphosphoglycerate + ADP + H(+). Its pathway is thermoadapter biosynthesis; cyclic 2,3-diphosphoglycerate biosynthesis; cyclic 2,3-diphosphoglycerate from 2-phospho-D-glycerate: step 1/2. Its function is as follows. Catalyzes the phosphorylation of 2-phosphoglycerate to 2,3-diphosphoglycerate. Involved in the biosynthesis of cyclic 2,3-bisphosphoglycerate, a thermoprotectant. The polypeptide is 2-phosphoglycerate kinase (Methanococcus maripaludis (strain C7 / ATCC BAA-1331)).